We begin with the raw amino-acid sequence, 454 residues long: Bifunctional protein GlmU (454 aa).

A pyrophosphorylase region spans residues 1 to 226 (MSLEIVILAA…AMEVQGVNDR (226 aa)). UDP-N-acetyl-alpha-D-glucosamine-binding positions include 8-11 (LAAG), lysine 22, glutamine 73, 78-79 (GT), 99-101 (YGD), glycine 136, glutamate 151, asparagine 166, and asparagine 224. Residue aspartate 101 participates in Mg(2+) binding. Asparagine 224 is a Mg(2+) binding site. Residues 227–247 (MQQAQLERHYQRLRAEELMRQ) are linker. The N-acetyltransferase stretch occupies residues 248–454 (GVTLLDPQRL…NWKRPEKIRK (207 aa)). UDP-N-acetyl-alpha-D-glucosamine contacts are provided by arginine 330 and lysine 348. The active-site Proton acceptor is the histidine 360. The UDP-N-acetyl-alpha-D-glucosamine site is built by tyrosine 363 and asparagine 374. Acetyl-CoA-binding positions include alanine 377, 383–384 (NY), serine 402, alanine 420, and arginine 437.

The protein in the N-terminal section; belongs to the N-acetylglucosamine-1-phosphate uridyltransferase family. This sequence in the C-terminal section; belongs to the transferase hexapeptide repeat family. Homotrimer. The cofactor is Mg(2+).

It is found in the cytoplasm. The enzyme catalyses alpha-D-glucosamine 1-phosphate + acetyl-CoA = N-acetyl-alpha-D-glucosamine 1-phosphate + CoA + H(+). It catalyses the reaction N-acetyl-alpha-D-glucosamine 1-phosphate + UTP + H(+) = UDP-N-acetyl-alpha-D-glucosamine + diphosphate. The protein operates within nucleotide-sugar biosynthesis; UDP-N-acetyl-alpha-D-glucosamine biosynthesis; N-acetyl-alpha-D-glucosamine 1-phosphate from alpha-D-glucosamine 6-phosphate (route II): step 2/2. Its pathway is nucleotide-sugar biosynthesis; UDP-N-acetyl-alpha-D-glucosamine biosynthesis; UDP-N-acetyl-alpha-D-glucosamine from N-acetyl-alpha-D-glucosamine 1-phosphate: step 1/1. It participates in bacterial outer membrane biogenesis; LPS lipid A biosynthesis. Its function is as follows. Catalyzes the last two sequential reactions in the de novo biosynthetic pathway for UDP-N-acetylglucosamine (UDP-GlcNAc). The C-terminal domain catalyzes the transfer of acetyl group from acetyl coenzyme A to glucosamine-1-phosphate (GlcN-1-P) to produce N-acetylglucosamine-1-phosphate (GlcNAc-1-P), which is converted into UDP-GlcNAc by the transfer of uridine 5-monophosphate (from uridine 5-triphosphate), a reaction catalyzed by the N-terminal domain. The polypeptide is Bifunctional protein GlmU (Pseudomonas paraeruginosa (strain DSM 24068 / PA7) (Pseudomonas aeruginosa (strain PA7))).